Reading from the N-terminus, the 541-residue chain is Protein ST7 homolog (541 aa).

Residues 15-35 (FYVALTGTSSLISGLILIFEW) form a helical membrane-spanning segment. The disordered stretch occupies residues 62–116 (DAQSDSSNGSGSSTSSGSSSSSNGGGGGGGGGAGGGGPGAGGGTNSTTTTGTQMP). Over residues 67–83 (SSNGSGSSTSSGSSSSS) the composition is skewed to low complexity. A compositionally biased stretch (gly residues) spans 84–105 (NGGGGGGGGGAGGGGPGAGGGT). A helical membrane pass occupies residues 476-496 (LPFFILFTAGLCSFTALLALL).

Belongs to the ST7 family.

It localises to the membrane. The polypeptide is Protein ST7 homolog (Drosophila pseudoobscura pseudoobscura (Fruit fly)).